Here is a 479-residue protein sequence, read N- to C-terminus: ATP synthase subunit beta (479 aa).

162-169 contributes to the ATP binding site; the sequence is GGAGVGKT.

The protein belongs to the ATPase alpha/beta chains family. In terms of assembly, F-type ATPases have 2 components, CF(1) - the catalytic core - and CF(0) - the membrane proton channel. CF(1) has five subunits: alpha(3), beta(3), gamma(1), delta(1), epsilon(1). CF(0) has three main subunits: a(1), b(2) and c(9-12). The alpha and beta chains form an alternating ring which encloses part of the gamma chain. CF(1) is attached to CF(0) by a central stalk formed by the gamma and epsilon chains, while a peripheral stalk is formed by the delta and b chains.

The protein localises to the cell membrane. The enzyme catalyses ATP + H2O + 4 H(+)(in) = ADP + phosphate + 5 H(+)(out). Produces ATP from ADP in the presence of a proton gradient across the membrane. The catalytic sites are hosted primarily by the beta subunits. The sequence is that of ATP synthase subunit beta from Mesoplasma florum (strain ATCC 33453 / NBRC 100688 / NCTC 11704 / L1) (Acholeplasma florum).